Here is a 447-residue protein sequence, read N- to C-terminus: Ribosomal protein uS12 methylthiotransferase RimO (447 aa).

One can recognise an MTTase N-terminal domain in the interval 10–120; the sequence is PKVGFVSLGC…VVNAVHDVVP (111 aa). The [4Fe-4S] cluster site is built by C19, C55, C84, C153, C157, and C160. The Radical SAM core domain maps to 139–377; sequence LTPRHYAYLK…MAHQQAISAA (239 aa). A TRAM domain is found at 380 to 447; the sequence is QMKIGKEIEV…DEYDLWAEML (68 aa).

The protein belongs to the methylthiotransferase family. RimO subfamily. It depends on [4Fe-4S] cluster as a cofactor.

It is found in the cytoplasm. The enzyme catalyses L-aspartate(89)-[ribosomal protein uS12]-hydrogen + (sulfur carrier)-SH + AH2 + 2 S-adenosyl-L-methionine = 3-methylsulfanyl-L-aspartate(89)-[ribosomal protein uS12]-hydrogen + (sulfur carrier)-H + 5'-deoxyadenosine + L-methionine + A + S-adenosyl-L-homocysteine + 2 H(+). Its function is as follows. Catalyzes the methylthiolation of an aspartic acid residue of ribosomal protein uS12. This is Ribosomal protein uS12 methylthiotransferase RimO from Pseudomonas syringae pv. syringae (strain B728a).